We begin with the raw amino-acid sequence, 1615 residues long: Ras-responsive element-binding protein 1 (1615 aa).

A disordered region spans residues 1–44 (MMSAVMNVGKIAENGGTSQTVKSPSKSPAPNRIGRRNQETKEEK). The span at 15 to 28 (GGTSQTVKSPSKSP) shows a compositional bias: polar residues. 3 consecutive C2H2-type zinc fingers follow at residues 47–69 (YTCPLCEKICTTQHQLTMHIRQH), 78–100 (HSCSICGKSLSSASSLDRHMLVH), and 106–128 (YKCSVCGQSFTTNGNMHRHMKIH). The disordered stretch occupies residues 127–169 (IHEKDPNSTASTTPPSPLKAKRLSSKRKFSQDAEMDREERTPA). A compositionally biased stretch (basic residues) spans 145–154 (KAKRLSSKRK). 3 C2H2-type zinc fingers span residues 189 to 211 (YHCPVCFKDFFCKYALESHMETH), 216 to 239 (LRCDICCITFRTHRGLLRHNAVIH), and 297 to 319 (FICETCNKAFPMLLALKLHTETH). The segment at 511 to 556 (SAQQASPGCISPSLPPPPLRLIKNSVETSSNSHLSQPGAKSSPSSQ) is disordered. A compositionally biased stretch (polar residues) spans 535 to 549 (SVETSSNSHLSQPGA). 4 C2H2-type zinc fingers span residues 622 to 644 (YPCRFCDQVFAFSGVLRAHIRSH), 650 to 672 (YQCNICDYIAADKAALIRHLRTH), 732 to 754 (TVCKLCGEDLKHYRALRIHMRTH), and 763 to 788 (FECKECGTAFSAKRNCIHHILKQHLH). 3 disordered regions span residues 1025–1044 (AADASPKAASSSTGCDKSGN), 1058–1104 (DSNL…VDLE), and 1123–1162 (KFSPFLQSTDNFKEESGQNGTSEDEKETPEDKLLRGKRNT). Over residues 1026 to 1036 (ADASPKAASSS) the composition is skewed to low complexity. Positions 1082-1095 (TKKRGRKKGTKNKP) are enriched in basic residues. Polar residues predominate over residues 1123 to 1132 (KFSPFLQSTD). The C2H2-type 11 zinc finger occupies 1170–1192 (ITCPYCPRVFSWASSLQRHMLTH). Disordered stretches follow at residues 1214–1269 (CEKE…KSLD) and 1313–1418 (LSRH…DKRK). Residues 1242–1262 (PAEEDAEEKADEYEEGPEEDS) are compositionally biased toward acidic residues. A C2H2-type 12 zinc finger spans residues 1298 to 1320 (HACDVCGKTFKFAGALSRHKKAH). 2 stretches are compositionally biased toward basic and acidic residues: residues 1321 to 1339 (IREDRKDERSSEDESKSIQ) and 1388 to 1414 (GTERKSTEKSSDDKIPKTDEAKSTAKA). 2 C2H2-type zinc fingers span residues 1419–1441 (KVCTVCNKRFWSLQDLTRHMRSH) and 1447–1469 (YKCQTCERTFTLKHSLVRHQRIH). The segment covering 1464 to 1477 (RHQRIHQKVKNTRN) has biased composition (basic residues). The tract at residues 1464-1585 (RHQRIHQKVK…SELERPSGFI (122 aa)) is disordered. Composition is skewed to basic and acidic residues over residues 1478–1493 (HGKESDKEETQSRCGE) and 1566–1580 (PAKDQEPRGSSELER).

It belongs to the krueppel C2H2-type zinc-finger protein family. As to expression, broadly expressed, except in brain.

The protein resides in the nucleus. Functionally, transcription factor that binds specifically to the RAS-responsive elements (RRE) of gene promoters. The polypeptide is Ras-responsive element-binding protein 1 (RREB1) (Gallus gallus (Chicken)).